The chain runs to 1982 residues: CASP8-associated protein 2 (1982 aa).

Ala2 is modified (N-acetylalanine). Phosphoserine is present on Ser20. The span at 159-191 shows a compositional bias: basic and acidic residues; it reads VKTKDLKSRSPHLDDCSKTDHRAKSDVSKDVHH. The tract at residues 159–552 is disordered; sequence VKTKDLKSRS…ESGPNETKNK (394 aa). Ser194 is modified (phosphoserine). Positions 198–210 are enriched in basic and acidic residues; sequence LEKEGKPHSDKRS. A compositionally biased stretch (polar residues) spans 225 to 240; sequence GVWSRSHYQVGEGSSN. Basic and acidic residues predominate over residues 286–395; the sequence is GHPEKYGKGE…ERASLPHSKN (110 aa). Residues 396-405 show a composition bias toward polar residues; that stretch reads EITFSHNSSK. Basic and acidic residues-rich tracts occupy residues 406 to 423, 444 to 455, and 463 to 524; these read YHLE…DKSV, KNIDSKEVDAMH, and KAER…KGEV. Ser567 is subject to Phosphoserine. Residues 569 to 593 are disordered; it reads AKKQPVSQDNQHKITDIPKSSGVCD. Residues Ser658, Ser815, and Ser875 each carry the phosphoserine modification. 3 disordered regions span residues 875–1017, 1157–1188, and 1251–1283; these read SPPQ…DKVM, FGRD…DNSN, and ERSL…HATL. Positions 894–904 are enriched in polar residues; that stretch reads SAHSTSKSQSD. Composition is skewed to basic and acidic residues over residues 905-924, 936-965, 999-1016, and 1157-1170; these read LNKE…EADT, GEIR…DVRK, KRPD…KDKV, and FGRD…EKTS. Ser940 carries the phosphoserine modification. Ser1161 bears the Phosphoserine mark. 2 stretches are compositionally biased toward polar residues: residues 1171–1181 and 1269–1281; these read KQNAQYSNSQK and GSSI…SQHA. Lys1343 carries the post-translational modification N6-acetyllysine. The SUMO interaction motif 1 (SIM); mediates the binding to polysumoylated substrates signature appears at 1683–1687; sequence YVDLT. The interval 1709-1982 is NCOA2-binding; sequence DQLGCSGGNL…MKLFEKSKCR (274 aa). The SUMO interaction motif 2 (SIM); mediates the binding to polysumoylated substrates signature appears at 1737 to 1741; the sequence is FIDLT. Residues 1794-1798 carry the SUMO interaction motif 3 (SIM); mediates the binding to polysumoylated substrates motif; sequence YIDLT. Residues 1803–1909 form a disordered region; sequence SSCEVKKDEL…IKDSSAALAT (107 aa). A compositionally biased stretch (basic and acidic residues) spans 1851–1865; the sequence is KETDLTNKEKTKKPT.

Self-associates. Component of the death-inducing signaling complex (DISC) with CASP8, FADD and FAS. Interacts with NCOA2 and NCOA3. Interacts with SRRT. Interacts with TRAF2. Interacts with NPAT. Interacts (via SIM domains) with SUMO1 and SUMO2. Interacts with SP100; may negatively regulate CASP8AP2 export from the nucleus to the cytoplasm.

The protein localises to the cytoplasm. The protein resides in the nucleus. Its subcellular location is the PML body. It is found in the mitochondrion. Functionally, participates in TNF-alpha-induced blockade of glucocorticoid receptor (GR) transactivation at the nuclear receptor coactivator level, upstream and independently of NF-kappa-B. Suppresses both NCOA2- and NCOA3-induced enhancement of GR transactivation. Involved in TNF-alpha-induced activation of NF-kappa-B via a TRAF2-dependent pathway. Acts as a downstream mediator for CASP8-induced activation of NF-kappa-B. Required for the activation of CASP8 in FAS-mediated apoptosis. Required for histone gene transcription and progression through S phase. The protein is CASP8-associated protein 2 of Homo sapiens (Human).